A 125-amino-acid chain; its full sequence is Glycine cleavage system H protein (125 aa).

One can recognise a Lipoyl-binding domain in the interval 19-101; the sequence is EVTVGITDHA…YHEGWLVKLK (83 aa). N6-lipoyllysine is present on Lys-60.

It belongs to the GcvH family. The glycine cleavage system is composed of four proteins: P, T, L and H. It depends on (R)-lipoate as a cofactor.

Functionally, the glycine cleavage system catalyzes the degradation of glycine. The H protein shuttles the methylamine group of glycine from the P protein to the T protein. In Legionella pneumophila (strain Corby), this protein is Glycine cleavage system H protein.